The primary structure comprises 430 residues: Histidine--tRNA ligase (430 aa).

Belongs to the class-II aminoacyl-tRNA synthetase family. In terms of assembly, homodimer.

The protein localises to the cytoplasm. The catalysed reaction is tRNA(His) + L-histidine + ATP = L-histidyl-tRNA(His) + AMP + diphosphate + H(+). This chain is Histidine--tRNA ligase, found in Synechococcus sp. (strain CC9902).